A 2195-amino-acid chain; its full sequence is Integrator complex subunit 1 (2195 aa).

The disordered stretch occupies residues 1-86; that stretch reads MNRAKPTTVR…RPKLSSTPPL (86 aa). Residue serine 13 is modified to Phosphoserine. Residues 34 to 45 show a composition bias toward polar residues; the sequence is GQASESKTTSTL. The residue at position 47 (lysine 47) is an N6-acetyllysine. Over residues 62 to 75 the composition is skewed to low complexity; the sequence is SASLSGTSALTGLT. Threonine 83 is subject to Phosphothreonine. Serine 87 carries the post-translational modification Phosphoserine. A disordered region spans residues 267-297; sequence LLQGEGARSGGELGAGSSPHPSLTEEEDSQT. 2 positions are modified to phosphoserine: serine 307 and serine 926. A disordered region spans residues 923–947; that stretch reads STASGEEDDEGESREQKAKKRQRQQ. A helical membrane pass occupies residues 1165-1185; the sequence is HILVVHAMVILLTLGPPRSGD. A disordered region spans residues 1313–1347; the sequence is SLPPRRDSTEAPKPESSPEPPPGQGRTRAGTQVPV. Over residues 1316–1325 the composition is skewed to basic and acidic residues; it reads PRRDSTEAPK. 3 positions are modified to phosphoserine: serine 1320, serine 1328, and serine 1329.

This sequence belongs to the Integrator subunit 1 family. In terms of assembly, component of the Integrator complex, composed of core subunits INTS1, INTS2, INTS3, INTS4, INTS5, INTS6, INTS7, INTS8, INTS9/RC74, INTS10, INTS11/CPSF3L, INTS12, INTS13, INTS14 and INTS15. The core complex associates with protein phosphatase 2A subunits PPP2CA and PPP2R1A, to form the Integrator-PP2A (INTAC) complex. Interacts with ESRRB, ESRRB is not a core component of the Integrator complex and this association is a bridge for the interaction with the multiprotein complex Integrator; attracts the transcriptional machinery.

The protein localises to the nucleus. It is found in the nucleus membrane. In terms of biological role, component of the integrator complex, a multiprotein complex that terminates RNA polymerase II (Pol II) transcription in the promoter-proximal region of genes. The integrator complex provides a quality checkpoint during transcription elongation by driving premature transcription termination of transcripts that are unfavorably configured for transcriptional elongation: the complex terminates transcription by (1) catalyzing dephosphorylation of the C-terminal domain (CTD) of Pol II subunit POLR2A/RPB1 and SUPT5H/SPT5, (2) degrading the exiting nascent RNA transcript via endonuclease activity and (3) promoting the release of Pol II from bound DNA. The integrator complex is also involved in terminating the synthesis of non-coding Pol II transcripts, such as enhancer RNAs (eRNAs), small nuclear RNAs (snRNAs), telomerase RNAs and long non-coding RNAs (lncRNAs). Within the integrator complex, INTS1 is involved in the post-termination step: INTS1 displaces INTS3 and the SOSS factors, allowing the integrator complex to return to the closed conformation, ready to bind to the paused elongation complex for another termination cycle. Mediates recruitment of cytoplasmic dynein to the nuclear envelope, probably as component of the integrator complex. This chain is Integrator complex subunit 1, found in Mus musculus (Mouse).